Here is a 169-residue protein sequence, read N- to C-terminus: Peptide methionine sulfoxide reductase MsrA (169 aa).

The active site involves Cys10.

This sequence belongs to the MsrA Met sulfoxide reductase family.

It carries out the reaction L-methionyl-[protein] + [thioredoxin]-disulfide + H2O = L-methionyl-(S)-S-oxide-[protein] + [thioredoxin]-dithiol. It catalyses the reaction [thioredoxin]-disulfide + L-methionine + H2O = L-methionine (S)-S-oxide + [thioredoxin]-dithiol. In terms of biological role, has an important function as a repair enzyme for proteins that have been inactivated by oxidation. Catalyzes the reversible oxidation-reduction of methionine sulfoxide in proteins to methionine. In Streptococcus agalactiae serotype III (strain NEM316), this protein is Peptide methionine sulfoxide reductase MsrA.